The following is a 216-amino-acid chain: Sugar fermentation stimulation protein homolog (216 aa).

The protein belongs to the SfsA family.

The sequence is that of Sugar fermentation stimulation protein homolog from Thermoplasma volcanium (strain ATCC 51530 / DSM 4299 / JCM 9571 / NBRC 15438 / GSS1).